Consider the following 312-residue polypeptide: Dihydroorotate dehydrogenase B (NAD(+)), catalytic subunit (312 aa).

FMN-binding positions include Ser-23 and 47-48 (KA). Residues Lys-47 and 71 to 75 (NAIGL) each bind substrate. 2 residues coordinate FMN: Asn-103 and Asn-131. Asn-131 contacts substrate. The active-site Nucleophile is the Cys-134. FMN-binding residues include Lys-171 and Ile-197. 198–199 (NT) is a binding site for substrate. FMN-binding positions include Gly-223, 249 to 250 (GG), and 271 to 272 (GT).

It belongs to the dihydroorotate dehydrogenase family. Type 1 subfamily. Heterotetramer of 2 PyrK and 2 PyrD type B subunits. It depends on FMN as a cofactor.

It localises to the cytoplasm. The enzyme catalyses (S)-dihydroorotate + NAD(+) = orotate + NADH + H(+). It functions in the pathway pyrimidine metabolism; UMP biosynthesis via de novo pathway; orotate from (S)-dihydroorotate (NAD(+) route): step 1/1. Catalyzes the conversion of dihydroorotate to orotate with NAD(+) as electron acceptor. The sequence is that of Dihydroorotate dehydrogenase B (NAD(+)), catalytic subunit (pyrDB) from Streptococcus pneumoniae (strain ATCC BAA-255 / R6).